The primary structure comprises 158 residues: Small ribosomal subunit protein uS15 (158 aa).

Residues 1–18 (MARMHARKRGKSGSKRPP) show a composition bias toward basic residues. The interval 1-21 (MARMHARKRGKSGSKRPPRTA) is disordered.

It belongs to the universal ribosomal protein uS15 family. Part of the 30S ribosomal subunit.

This is Small ribosomal subunit protein uS15 from Pyrococcus furiosus (strain ATCC 43587 / DSM 3638 / JCM 8422 / Vc1).